The primary structure comprises 419 residues: L-2-hydroxyglutarate dehydrogenase, mitochondrial (419 aa).

The N-terminal 51 residues, 1–51, are a transit peptide targeting the mitochondrion; it reads MVPALRYLVGACGRARGGFAGDFPGASGLASGRPRPLCGGSRSASTSSFDI. N6-acetyllysine is present on residues K104 and K173.

This sequence belongs to the L2HGDH family. The cofactor is FAD.

It is found in the mitochondrion. The catalysed reaction is (S)-2-hydroxyglutarate + A = 2-oxoglutarate + AH2. The protein is L-2-hydroxyglutarate dehydrogenase, mitochondrial (L2HGDH) of Pongo abelii (Sumatran orangutan).